Consider the following 307-residue polypeptide: UDP-N-acetylenolpyruvoylglucosamine reductase (307 aa).

Residues 34-198 form the FAD-binding PCMH-type domain; it reads LGGKADVYIT…LEATFALKKA (165 aa). Arginine 177 is an active-site residue. Serine 227 (proton donor) is an active-site residue. Residue glutamate 297 is part of the active site.

Belongs to the MurB family. The cofactor is FAD.

Its subcellular location is the cytoplasm. It catalyses the reaction UDP-N-acetyl-alpha-D-muramate + NADP(+) = UDP-N-acetyl-3-O-(1-carboxyvinyl)-alpha-D-glucosamine + NADPH + H(+). The protein operates within cell wall biogenesis; peptidoglycan biosynthesis. Its function is as follows. Cell wall formation. In Oceanobacillus iheyensis (strain DSM 14371 / CIP 107618 / JCM 11309 / KCTC 3954 / HTE831), this protein is UDP-N-acetylenolpyruvoylglucosamine reductase.